Reading from the N-terminus, the 1120-residue chain is Vacuolar cation-chloride cotransporter 1 (1120 aa).

The tract at residues 1 to 21 (MVSRFYQIPGTHRPSSAISSS) is disordered. Topologically, residues 1–62 (MVSRFYQIPG…YDPDNPNKDK (62 aa)) are cytoplasmic. Ser34 carries the post-translational modification Phosphoserine. Residues 63–83 (LGTYDGVFVPTALNVLSILMF) form a helical membrane-spanning segment. At 84–85 (LR) the chain is on the vacuolar side. A helical membrane pass occupies residues 86 to 106 (FGFILGQLGIICTIGLLLLSY). Topologically, residues 107-145 (TINLLTTLSISAISTNGTVRGGGAYYMISRSLGPEFGGS) are cytoplasmic. The helical transmembrane segment at 146 to 166 (IGLVFFLGQVFNAGMNAVGII) threads the bilayer. Topologically, residues 167–193 (EPLLYNLGYSAQGEPPAALGELLPRGH) are vacuolar. A helical transmembrane segment spans residues 194–214 (WHEFTYATVILFLCFSVAFVG). Residues 215-221 (SQTVSRA) are Cytoplasmic-facing. Residues 222–242 (GNILFLVLAASIFSIPLSALI) form a helical membrane-spanning segment. Over 243 to 283 (RSPFTEGGISYTGPSWQTFHDNLLPHLTKGAAGSLLKGKET) the chain is Vacuolar. A helical membrane pass occupies residues 284 to 304 (FNDLFGVFFPATAGIFAGAGM). Topologically, residues 305-317 (SSELRKPSKSIPK) are cytoplasmic. Residues 318–338 (GTLWGLLFTFICYAVVVFSMG) traverse the membrane as a helical segment. At 339 to 360 (CSIPRRSLYDEVQIIQTISSVQ) the chain is on the vacuolar side. Residues 361-381 (WVIFMGEMATSLFSIIVGMLG) traverse the membrane as a helical segment. Over 382 to 393 (AAYVLEAIAKDN) the chain is Cytoplasmic. The chain crosses the membrane as a helical span at residues 394 to 414 (IIPGLEIFAHSPLYSLIFTWI). Residues 415–430 (LTQLCLFSDVNKIATF) lie on the Vacuolar side of the membrane. A helical membrane pass occupies residues 431-451 (ITMTFLMTFVVMNLACFLLGI). The Cytoplasmic segment spans residues 452–462 (SSAPNFRPSFK). The helical transmembrane segment at 463-482 (YFNRYTTAIGALLSVVAMLI) threads the bilayer. The Vacuolar portion of the chain corresponds to 483–487 (VDGIS). A helical membrane pass occupies residues 488-506 (ASVLFLAMILLFLFIHYFS). Topologically, residues 507 to 1120 (PPKSWGDVSQ…SQTMTVTTAL (614 aa)) are cytoplasmic. Phosphoserine is present on residues Ser654, Ser915, and Ser918.

Belongs to the SLC12A transporter family.

It is found in the vacuole membrane. Catalyzes the coordinated symport of chloride with potassium ions across the vacuolar membrane. Involved in vacuolar osmoregulation. The sequence is that of Vacuolar cation-chloride cotransporter 1 from Saccharomyces cerevisiae (strain ATCC 204508 / S288c) (Baker's yeast).